Reading from the N-terminus, the 81-residue chain is Trefoil factor 3 (81 aa).

Positions 1–23 (MEARTFWLLVVAVLALGSSSSTG) are cleaved as a signal peptide. The 44-residue stretch at 31–74 (NQCAVPAKDRVDCGYPEVTPEQCNNRGCCFDSSIHGVPWCFKPL) folds into the P-type domain. 3 disulfide bridges follow: Cys33/Cys59, Cys43/Cys58, and Cys53/Cys70.

In terms of assembly, monomer. Homodimer; disulfide-linked.

It is found in the secreted. It localises to the extracellular space. Its subcellular location is the extracellular matrix. The protein resides in the cytoplasm. In terms of biological role, involved in the maintenance and repair of the intestinal mucosa. Promotes the mobility of epithelial cells in healing processes (motogen). This is Trefoil factor 3 (TFF3) from Bos taurus (Bovine).